Consider the following 276-residue polypeptide: 4-chlorobenzoyl coenzyme A dehalogenase-2 (276 aa).

Substrate is bound at residue 66-71; it reads AGFDLE. H93 serves as the catalytic Proton acceptor. Residue G117 participates in substrate binding. The active-site Nucleophile is the D148. R261 serves as a coordination point for substrate.

This sequence belongs to the enoyl-CoA hydratase/isomerase family. As to quaternary structure, homotetramer.

The enzyme catalyses 4-chlorobenzoyl-CoA + H2O = 4-hydroxybenzoyl-CoA + chloride + H(+). Its pathway is xenobiotic degradation; 4-chlorobenzoate degradation; 4-hydroxybenzoate from 4-chlorobenzoate: step 2/3. Its function is as follows. Dehalogenates 4-chlorobenzoyl-CoA, 4-iodobenzoyl-CoA, 4-bromobenzoyl-CoA and, at a slower rate, 4-fluorobenzoyl-CoA. Does not dehalogenate 2-chlorobenzoyl-CoA or 3-chlorobenzoyl-CoA. This chain is 4-chlorobenzoyl coenzyme A dehalogenase-2, found in Arthrobacter sp.